Here is a 309-residue protein sequence, read N- to C-terminus: Ecotin-like protein 3 (309 aa).

A disordered region spans residues 140–309 (QQELEAPAVS…KSGRDSRRNS (170 aa)). The segment covering 156–167 (VRERQNNPEGHA) has biased composition (basic and acidic residues). Over residues 168-180 (HPVVVHSVESPEV) the composition is skewed to low complexity. Residues 181–190 (SGHKDGDQPM) are compositionally biased toward basic and acidic residues. Residues 196 to 205 (LKQSCSNSSR) show a composition bias toward low complexity. Residues 209-221 (HSASGSSPKNTPL) show a composition bias toward polar residues. A compositionally biased stretch (basic and acidic residues) spans 261 to 279 (SDSTSSRKDDQDSGYEKKV). Low complexity predominate over residues 290–299 (SSPKRSASPK).

The protein belongs to the protease inhibitor I11 (ecotin) family.

This chain is Ecotin-like protein 3, found in Leishmania braziliensis.